The chain runs to 219 residues: Uracil-DNA glycosylase (219 aa).

Catalysis depends on aspartate 59, which acts as the Proton acceptor.

The protein belongs to the uracil-DNA glycosylase (UDG) superfamily. UNG family.

Its subcellular location is the cytoplasm. The enzyme catalyses Hydrolyzes single-stranded DNA or mismatched double-stranded DNA and polynucleotides, releasing free uracil.. Its function is as follows. Excises uracil residues from the DNA which can arise as a result of misincorporation of dUMP residues by DNA polymerase or due to deamination of cytosine. This Macrococcus caseolyticus (strain JCSC5402) (Macrococcoides caseolyticum) protein is Uracil-DNA glycosylase.